The following is a 196-amino-acid chain: UPF0340 protein TT_C0214 (196 aa).

This sequence belongs to the UPF0340 family.

The polypeptide is UPF0340 protein TT_C0214 (Thermus thermophilus (strain ATCC BAA-163 / DSM 7039 / HB27)).